The following is a 115-amino-acid chain: Nucleoid-associated protein alr5067 (115 aa).

Belongs to the YbaB/EbfC family. Homodimer.

The protein localises to the cytoplasm. It localises to the nucleoid. Its function is as follows. Binds to DNA and alters its conformation. May be involved in regulation of gene expression, nucleoid organization and DNA protection. The sequence is that of Nucleoid-associated protein alr5067 from Nostoc sp. (strain PCC 7120 / SAG 25.82 / UTEX 2576).